The primary structure comprises 37 residues: Large ribosomal subunit protein bL36c (37 aa).

The protein belongs to the bacterial ribosomal protein bL36 family.

It localises to the plastid. Its subcellular location is the chloroplast. The sequence is that of Large ribosomal subunit protein bL36c from Cucumis sativus (Cucumber).